The primary structure comprises 124 residues: Small ribosomal subunit protein bS6 (124 aa).

The interval 96-124 (ETGPSPMMKEVQREEAKKAAAAQPAEAQA) is disordered. Over residues 114 to 124 (AAAAQPAEAQA) the composition is skewed to low complexity.

It belongs to the bacterial ribosomal protein bS6 family.

Binds together with bS18 to 16S ribosomal RNA. This is Small ribosomal subunit protein bS6 from Burkholderia orbicola (strain AU 1054).